The following is a 300-amino-acid chain: Geranylgeranyl pyrophosphate synthase (300 aa).

Met1 bears the N-acetylmethionine mark. 3 residues coordinate isopentenyl diphosphate: Lys25, Arg28, and His57. Residues Asp64 and Asp68 each contribute to the Mg(2+) site. Position 73 (Arg73) interacts with dimethylallyl diphosphate. Arg74 is an isopentenyl diphosphate binding site. Residues Lys151, Thr152, Gln185, Lys202, and Lys212 each coordinate dimethylallyl diphosphate.

The protein belongs to the FPP/GGPP synthase family. As to quaternary structure, homohexamer; trimer of homodimers. Mg(2+) is required as a cofactor.

It localises to the cytoplasm. The protein localises to the perinuclear region. It is found in the myofibril. Its subcellular location is the sarcomere. The protein resides in the z line. It carries out the reaction isopentenyl diphosphate + dimethylallyl diphosphate = (2E)-geranyl diphosphate + diphosphate. The catalysed reaction is isopentenyl diphosphate + (2E)-geranyl diphosphate = (2E,6E)-farnesyl diphosphate + diphosphate. It catalyses the reaction isopentenyl diphosphate + (2E,6E)-farnesyl diphosphate = (2E,6E,10E)-geranylgeranyl diphosphate + diphosphate. The protein operates within isoprenoid biosynthesis; farnesyl diphosphate biosynthesis; farnesyl diphosphate from geranyl diphosphate and isopentenyl diphosphate: step 1/1. Its pathway is isoprenoid biosynthesis; geranyl diphosphate biosynthesis; geranyl diphosphate from dimethylallyl diphosphate and isopentenyl diphosphate: step 1/1. It functions in the pathway isoprenoid biosynthesis; geranylgeranyl diphosphate biosynthesis; geranylgeranyl diphosphate from farnesyl diphosphate and isopentenyl diphosphate: step 1/1. Catalyzes the trans-addition of the three molecules of isopentenyl diphosphate (IPP) onto dimethylallyl pyrophosphate (DMAPP) to form geranylgeranyl pyrophosphate, an important precursor of carotenoids and geranylated proteins. The protein is Geranylgeranyl pyrophosphate synthase of Mus musculus (Mouse).